The primary structure comprises 168 residues: Ribosome maturation factor RimM (168 aa).

The PRC barrel domain maps to 96–168 (EGDYYWTDLI…IIVVEWDADF (73 aa)).

It belongs to the RimM family. Binds ribosomal protein uS19.

It is found in the cytoplasm. In terms of biological role, an accessory protein needed during the final step in the assembly of 30S ribosomal subunit, possibly for assembly of the head region. Essential for efficient processing of 16S rRNA. May be needed both before and after RbfA during the maturation of 16S rRNA. It has affinity for free ribosomal 30S subunits but not for 70S ribosomes. The polypeptide is Ribosome maturation factor RimM (Coxiella burnetii (strain RSA 331 / Henzerling II)).